Reading from the N-terminus, the 55-residue chain is ATP synthase F(0) complex subunit 8 (55 aa).

The helical transmembrane segment at 10–32 threads the bilayer; sequence FFTMLTTWLTFLLLIQPKLLSFI.

This sequence belongs to the ATPase protein 8 family. As to quaternary structure, component of the ATP synthase complex composed at least of ATP5F1A/subunit alpha, ATP5F1B/subunit beta, ATP5MC1/subunit c (homooctomer), MT-ATP6/subunit a, MT-ATP8/subunit 8, ATP5ME/subunit e, ATP5MF/subunit f, ATP5MG/subunit g, ATP5MK/subunit k, ATP5MJ/subunit j, ATP5F1C/subunit gamma, ATP5F1D/subunit delta, ATP5F1E/subunit epsilon, ATP5PF/subunit F6, ATP5PB/subunit b, ATP5PD/subunit d, ATP5PO/subunit OSCP. ATP synthase complex consists of a soluble F(1) head domain (subunits alpha(3) and beta(3)) - the catalytic core - and a membrane F(0) domain - the membrane proton channel (subunits c, a, 8, e, f, g, k and j). These two domains are linked by a central stalk (subunits gamma, delta, and epsilon) rotating inside the F1 region and a stationary peripheral stalk (subunits F6, b, d, and OSCP).

The protein localises to the mitochondrion membrane. In terms of biological role, subunit 8, of the mitochondrial membrane ATP synthase complex (F(1)F(0) ATP synthase or Complex V) that produces ATP from ADP in the presence of a proton gradient across the membrane which is generated by electron transport complexes of the respiratory chain. ATP synthase complex consist of a soluble F(1) head domain - the catalytic core - and a membrane F(1) domain - the membrane proton channel. These two domains are linked by a central stalk rotating inside the F(1) region and a stationary peripheral stalk. During catalysis, ATP synthesis in the catalytic domain of F(1) is coupled via a rotary mechanism of the central stalk subunits to proton translocation. In vivo, can only synthesize ATP although its ATP hydrolase activity can be activated artificially in vitro. Part of the complex F(0) domain. The protein is ATP synthase F(0) complex subunit 8 of Guira guira (Guira cuckoo).